The following is a 342-amino-acid chain: Ribosomal RNA small subunit methyltransferase C (342 aa).

Belongs to the methyltransferase superfamily. RsmC family. Monomer.

The protein localises to the cytoplasm. It catalyses the reaction guanosine(1207) in 16S rRNA + S-adenosyl-L-methionine = N(2)-methylguanosine(1207) in 16S rRNA + S-adenosyl-L-homocysteine + H(+). Specifically methylates the guanine in position 1207 of 16S rRNA in the 30S particle. This chain is Ribosomal RNA small subunit methyltransferase C, found in Salmonella choleraesuis (strain SC-B67).